We begin with the raw amino-acid sequence, 146 residues long: MDIHEILKYLPHRYPLLLVDRVLAFEPGKSLTALKNVTINEPFFTGHFPHHPVMPGVLVIEALAQAAALLTLKTSNVEADENSIYYFVGIDNARFKRPVEPGDQLILKATVLKERIGIWKYAARAEVDGRVAAEAELMCTVRPKET.

Residue H47 is part of the active site.

The protein belongs to the thioester dehydratase family. FabZ subfamily.

It is found in the cytoplasm. The enzyme catalyses a (3R)-hydroxyacyl-[ACP] = a (2E)-enoyl-[ACP] + H2O. Its function is as follows. Involved in unsaturated fatty acids biosynthesis. Catalyzes the dehydration of short chain beta-hydroxyacyl-ACPs and long chain saturated and unsaturated beta-hydroxyacyl-ACPs. This chain is 3-hydroxyacyl-[acyl-carrier-protein] dehydratase FabZ, found in Nitrosospira multiformis (strain ATCC 25196 / NCIMB 11849 / C 71).